The primary structure comprises 474 residues: Replication-associated protein (474 aa).

A Nuclear localization signal motif is present at residues 248 to 255 (GKRFQEDR). The tract at residues 455–474 (AFAPGFSLTSEPEPKRRRFF) is disordered.

It localises to the host nucleus. Its function is as follows. Plays an essential for the replication of viral DNA. Presumably cleaves viral genomic dsRNA replicative form to initiate rolling circle replication. The protein is Replication-associated protein of Avon-Heathcote Estuary associated kieseladnavirus (AHEaBV).